The following is a 338-amino-acid chain: uncharacterized protein (338 aa).

6 helical membrane-spanning segments follow: residues 13–33, 71–91, 110–130, 176–196, 218–238, and 301–321; these read PAYS…DFLM, GLYS…ALFF, TLCF…VYVP, YGYR…LLFY, LITG…LDVA, and FRGF…MFVF. 3 Solcar repeats span residues 13–100, 108–202, and 216–328; these read PAYS…TKRH, PETL…LRQV, and RELI…IIRL.

This sequence belongs to the mitochondrial carrier (TC 2.A.29) family.

It localises to the mitochondrion inner membrane. Mitochondrial solute carriers shuttle metabolites, nucleotides, and cofactors through the mitochondrial inner membrane. This is an uncharacterized protein from Schizosaccharomyces pombe (strain 972 / ATCC 24843) (Fission yeast).